The primary structure comprises 99 residues: MSATQKDPRDIIIAPVVSEKSYGLIDQGKYTFIVDPRSNKTEIKLAIEKIFGVQVASVNTLNKQGKTRRTKFGMGKRKDTKRAIVSLKSGSIDIFTTVG.

This sequence belongs to the universal ribosomal protein uL23 family. Part of the 50S ribosomal subunit. Contacts protein L29, and trigger factor when it is bound to the ribosome.

In terms of biological role, one of the early assembly proteins it binds 23S rRNA. One of the proteins that surrounds the polypeptide exit tunnel on the outside of the ribosome. Forms the main docking site for trigger factor binding to the ribosome. This Clavibacter michiganensis subsp. michiganensis (strain NCPPB 382) protein is Large ribosomal subunit protein uL23.